The primary structure comprises 54 residues: Putative ATP synthase subunit epsilon, mitochondrial (54 aa).

It belongs to the eukaryotic ATPase epsilon family. In terms of assembly, F-type ATPases have 2 components, CF(1) - the catalytic core - and CF(0) - the membrane proton channel. CF(1) has five subunits: alpha(3), beta(3), gamma(1), delta(1), epsilon(1). CF(0) seems to have nine subunits: a, b, c, d, e, f, g, F6 and 8 (or A6L).

It localises to the mitochondrion. Its subcellular location is the mitochondrion inner membrane. Functionally, mitochondrial membrane ATP synthase (F(1)F(0) ATP synthase or Complex V) produces ATP from ADP in the presence of a proton gradient across the membrane which is generated by electron transport complexes of the respiratory chain. F-type ATPases consist of two structural domains, F(1) - containing the extramembraneous catalytic core, and F(0) - containing the membrane proton channel, linked together by a central stalk and a peripheral stalk. During catalysis, ATP synthesis in the catalytic domain of F(1) is coupled via a rotary mechanism of the central stalk subunits to proton translocation. Part of the complex F(1) domain and of the central stalk which is part of the complex rotary element. Rotation of the central stalk against the surrounding alpha(3)beta(3) subunits leads to hydrolysis of ATP in three separate catalytic sites on the beta subunits. This chain is Putative ATP synthase subunit epsilon, mitochondrial, found in Caenorhabditis elegans.